A 231-amino-acid chain; its full sequence is Flagellar L-ring protein (231 aa).

Residues 1-18 form the signal peptide; that stretch reads MNRLLSVFALGGAVLLAG. Cys19 carries the N-palmitoyl cysteine lipid modification. Residue Cys19 is the site of S-diacylglycerol cysteine attachment.

The protein belongs to the FlgH family. As to quaternary structure, the basal body constitutes a major portion of the flagellar organelle and consists of four rings (L,P,S, and M) mounted on a central rod.

The protein localises to the cell outer membrane. It is found in the bacterial flagellum basal body. In terms of biological role, assembles around the rod to form the L-ring and probably protects the motor/basal body from shearing forces during rotation. In Pseudomonas putida (strain GB-1), this protein is Flagellar L-ring protein.